We begin with the raw amino-acid sequence, 1085 residues long: MTIMAQVLHMDSSFPGKINPPVPPSLHAKDQEAPYSVETPYGYRLDLDFLKYVNDIEKGNTIKKVPVQRRPRYGSLPRGYGYTGSWWTSTESLCSNASMDSRHSSYSYCAPGFHTSQRPNFSTARVEKTLMDARRKLEEEKDGRRFSNLGSMHSSMAGSNTSLSSAHSFNRAQGGGSYTPMSSGLSTPVSPTPAHLQHVREQMAVALRKIRELEEQVKTIPVLQVKISVLQEEKRQLSVQLKSQKFLGHTLGFNRSRPRGELYIDIPEEEAGNGAGAANKATGSLSPTTPGSLQDSGCEIEETVIVAGARPGAKREVRTVGVGPEAEERGYRQVGVGVREQDLGLLPETEALKTKVGLLEVQLRKTMQELQSAQQQVEAAQKERQTVCPQVDHAVRATSLGWQDQQGQAGAGLHTVVSFTKQPHQQRTVGIQVYTLEQPTVVGVGTLLRAQGCTHPAQLEASHRRYGESPAAGDSPHEFPIAISSKQVREVLRSEVSKSVPVTNQATPMETKCNQVTAVCQRLKEGEINQQPAEEAIQVDPANPASPQSNLRSIMKRKADGEPGSPYTKKNLQFLGVNGGYESTSSEESSSESSEDESDASEYHEATEKLPESATPQSLVSSCIPQLASETPATQTAQHSTAQIPTNHTPAAQTTSQSHTTDATTQQHVTQSPAAEADVQHCVSQSSVTTTPPPEGDVQCVFQGCNPPSTATSLEQNSVQLSSATQQSKATDSNVQPDLAQTDVSDFAAQQTTTQTQFTSAKPQQEASQSKTADLTAQKGATHSTDGSAKQDIAISSTTKPAADTATPPTNKQTDSLELSGGLMSALHILQKALSEPNAFSHQDARTAYTSVLQEWLRVSCHKAADTAVVKAHMDAFASISPQLLEFVINMADGNGNTALHYTVSHSNFPVVKLLLDTGLCNADKQNKAGYTAIMLTALAAFSSDSDLQTVLQLLRTGDVNAKASQAGQTALMLAVSHGRGDMVKALLACGAQVNLRDDDGSTALMCACEHGHVDIVRQLLSVPGCDATLTDNDGSTALSIALEASQNDIAVLLYAHLNFAKPPSPVSPKSPILGSSPPSSSELK.

The segment covering 136-145 (KLEEEKDGRR) has biased composition (basic and acidic residues). Positions 136–192 (KLEEEKDGRRFSNLGSMHSSMAGSNTSLSSAHSFNRAQGGGSYTPMSSGLSTPVSPT) are disordered. Polar residues-rich tracts occupy residues 148–171 (NLGS…SFNR) and 179–189 (TPMSSGLSTPV). The stretch at 196-216 (LQHVREQMAVALRKIRELEEQ) forms a coiled coil. A disordered region spans residues 273–295 (NGAGAANKATGSLSPTTPGSLQD). Residues 281–295 (ATGSLSPTTPGSLQD) are compositionally biased toward polar residues. Residues 356-383 (VGLLEVQLRKTMQELQSAQQQVEAAQKE) adopt a coiled-coil conformation. 3 disordered regions span residues 557 to 736 (RKAD…SNVQ), 752 to 791 (TTTQ…SAKQ), and 798 to 817 (TTKP…TDSL). Over residues 589–600 (SSSESSEDESDA) the composition is skewed to acidic residues. Positions 601–611 (SEYHEATEKLP) are enriched in basic and acidic residues. Positions 614 to 648 (ATPQSLVSSCIPQLASETPATQTAQHSTAQIPTNH) are enriched in polar residues. Residues 649 to 668 (TPAAQTTSQSHTTDATTQQH) show a composition bias toward low complexity. 2 stretches are compositionally biased toward polar residues: residues 706 to 736 (NPPS…SNVQ) and 760 to 788 (SAKP…TDGS). Low complexity predominate over residues 798–810 (TTKPAADTATPPT). ANK repeat units follow at residues 895–925 (NGNT…NADK), 929–962 (AGYT…DVNA), 967–996 (AGQT…QVNL), 1000–1030 (DGST…DATL), and 1034–1063 (DGST…FAKP). The tract at residues 1064-1085 (PSPVSPKSPILGSSPPSSSELK) is disordered. A compositionally biased stretch (low complexity) spans 1070–1085 (KSPILGSSPPSSSELK).

The protein localises to the cytoplasm. The protein resides in the mitochondrion. May be involved in different biological processes including transcription and apoptosis by sequestering specific proteins outside of the nucleus. Involved in actin stress fibers formation probably through its interaction with ARHGDIA and the regulation of the Rho signaling pathway. May thereby play a role in cell adhesion and migration, regulating for instance podocytes migration during development of the kidney. This chain is KN motif and ankyrin repeat domain-containing protein 2 (kank2), found in Danio rerio (Zebrafish).